A 714-amino-acid chain; its full sequence is Fatty acid oxidation complex subunit alpha (714 aa).

The tract at residues 1 to 190 (MEMASAFTLN…KLGLVDDVVP (190 aa)) is enoyl-CoA hydratase. Residues 306–714 (APLNSVGILG…FWKTTATDLQ (409 aa)) are 3-hydroxyacyl-CoA dehydrogenase.

The protein in the N-terminal section; belongs to the enoyl-CoA hydratase/isomerase family. This sequence in the central section; belongs to the 3-hydroxyacyl-CoA dehydrogenase family. Heterotetramer of two alpha chains (FadJ) and two beta chains (FadI).

It is found in the cytoplasm. The catalysed reaction is a (3S)-3-hydroxyacyl-CoA = a (2E)-enoyl-CoA + H2O. It catalyses the reaction a 4-saturated-(3S)-3-hydroxyacyl-CoA = a (3E)-enoyl-CoA + H2O. It carries out the reaction a (3S)-3-hydroxyacyl-CoA + NAD(+) = a 3-oxoacyl-CoA + NADH + H(+). The enzyme catalyses (3S)-3-hydroxybutanoyl-CoA = (3R)-3-hydroxybutanoyl-CoA. It functions in the pathway lipid metabolism; fatty acid beta-oxidation. Its function is as follows. Catalyzes the formation of a hydroxyacyl-CoA by addition of water on enoyl-CoA. Also exhibits 3-hydroxyacyl-CoA epimerase and 3-hydroxyacyl-CoA dehydrogenase activities. This Shigella flexneri protein is Fatty acid oxidation complex subunit alpha.